The following is a 507-amino-acid chain: Bifunctional purine biosynthesis protein PurH (507 aa).

Residues 1–144 (MKRALLSVSD…KNSDSVWAVV (144 aa)) form the MGS-like domain.

The protein belongs to the PurH family.

The enzyme catalyses (6R)-10-formyltetrahydrofolate + 5-amino-1-(5-phospho-beta-D-ribosyl)imidazole-4-carboxamide = 5-formamido-1-(5-phospho-D-ribosyl)imidazole-4-carboxamide + (6S)-5,6,7,8-tetrahydrofolate. It catalyses the reaction IMP + H2O = 5-formamido-1-(5-phospho-D-ribosyl)imidazole-4-carboxamide. Its pathway is purine metabolism; IMP biosynthesis via de novo pathway; 5-formamido-1-(5-phospho-D-ribosyl)imidazole-4-carboxamide from 5-amino-1-(5-phospho-D-ribosyl)imidazole-4-carboxamide (10-formyl THF route): step 1/1. It functions in the pathway purine metabolism; IMP biosynthesis via de novo pathway; IMP from 5-formamido-1-(5-phospho-D-ribosyl)imidazole-4-carboxamide: step 1/1. The sequence is that of Bifunctional purine biosynthesis protein PurH from Lacticaseibacillus paracasei (strain ATCC 334 / BCRC 17002 / CCUG 31169 / CIP 107868 / KCTC 3260 / NRRL B-441) (Lactobacillus paracasei).